Here is a 207-residue protein sequence, read N- to C-terminus: Guanylate kinase (207 aa).

A Guanylate kinase-like domain is found at 5–184; sequence GNLFIVSAPS…ALADLVAIIR (180 aa). Residue 12-19 participates in ATP binding; it reads APSGAGKS.

The protein belongs to the guanylate kinase family.

Its subcellular location is the cytoplasm. It carries out the reaction GMP + ATP = GDP + ADP. Essential for recycling GMP and indirectly, cGMP. In Shewanella violacea (strain JCM 10179 / CIP 106290 / LMG 19151 / DSS12), this protein is Guanylate kinase.